The following is a 175-amino-acid chain: Gamma-crystallin-1 (175 aa).

2 consecutive Beta/gamma crystallin 'Greek key' domains span residues 2-40 (GKIF…RVEG) and 41-83 (GNWI…RFLP). The tract at residues 84 to 88 (NYQGQ) is connecting peptide. Beta/gamma crystallin 'Greek key' domains are found at residues 89–129 (YKMR…NVFD) and 130–172 (GHWM…RRVY).

It belongs to the beta/gamma-crystallin family. As to quaternary structure, monomer.

Functionally, crystallins are the dominant structural components of the vertebrate eye lens. The chain is Gamma-crystallin-1 (cryg1) from Xenopus laevis (African clawed frog).